Consider the following 909-residue polypeptide: Protein translocase subunit SecA (909 aa).

Residues glutamine 87, 105 to 109 (GEGKT), and aspartate 507 each bind ATP. 2 disordered regions span residues 567–586 (RRID…PGSS) and 859–909 (YSEA…GKLD). A compositionally biased stretch (basic and acidic residues) spans 865–889 (EHQSVTEGHEAKQQPFVRKSDKIGR). Zn(2+)-binding residues include cysteine 893, cysteine 895, cysteine 904, and histidine 905. Over residues 899-909 (RKYKQCHGKLD) the composition is skewed to basic residues.

This sequence belongs to the SecA family. In terms of assembly, monomer and homodimer. Part of the essential Sec protein translocation apparatus which comprises SecA, SecYEG and auxiliary proteins SecDF-YajC and YidC. The cofactor is Zn(2+).

Its subcellular location is the cell inner membrane. It localises to the cytoplasm. The catalysed reaction is ATP + H2O + cellular proteinSide 1 = ADP + phosphate + cellular proteinSide 2.. Its function is as follows. Part of the Sec protein translocase complex. Interacts with the SecYEG preprotein conducting channel. Has a central role in coupling the hydrolysis of ATP to the transfer of proteins into and across the cell membrane, serving both as a receptor for the preprotein-SecB complex and as an ATP-driven molecular motor driving the stepwise translocation of polypeptide chains across the membrane. This Nitrosomonas eutropha (strain DSM 101675 / C91 / Nm57) protein is Protein translocase subunit SecA.